The primary structure comprises 103 residues: Putative membrane protein insertion efficiency factor (103 aa).

This sequence belongs to the UPF0161 family.

Its subcellular location is the cell inner membrane. In terms of biological role, could be involved in insertion of integral membrane proteins into the membrane. The polypeptide is Putative membrane protein insertion efficiency factor (Chlamydia abortus (strain DSM 27085 / S26/3) (Chlamydophila abortus)).